A 910-amino-acid chain; its full sequence is Chitin synthase A (910 aa).

The segment at 56 to 156 is disordered; the sequence is NYHDDYDPRP…EPAPTPTPAP (101 aa). Basic and acidic residues-rich tracts occupy residues 57–84 and 130–148; these read YHDD…HHDA and DPHD…HDEP. A run of 9 helical transmembrane segments spans residues 366–386, 448–468, 583–603, 620–640, 655–675, 701–721, 730–750, 828–848, and 876–896; these read WFFQ…IDAG, SAFG…YVAL, VYQT…FLVF, VLFI…FILS, MVYF…FITV, TLII…IIFL, FIQY…YAFC, GVVL…LQAG, and LYSV…FLVV.

The protein belongs to the chitin synthase family. Class I subfamily.

It localises to the cell membrane. It catalyses the reaction [(1-&gt;4)-N-acetyl-beta-D-glucosaminyl](n) + UDP-N-acetyl-alpha-D-glucosamine = [(1-&gt;4)-N-acetyl-beta-D-glucosaminyl](n+1) + UDP + H(+). In terms of biological role, polymerizes chitin, a structural polymer of the cell wall and septum, by transferring the sugar moiety of UDP-GlcNAc to the non-reducing end of the growing chitin polymer. In Ampelomyces quisqualis (Powdery mildew agent), this protein is Chitin synthase A (CHSA).